The sequence spans 788 residues: LPS-assembly protein LptD (788 aa).

Positions 1 to 23 (MSLTSRSLLATMISLALYGPAMA) are cleaved as a signal peptide.

It belongs to the LptD family. In terms of assembly, component of the lipopolysaccharide transport and assembly complex. Interacts with LptE and LptA.

The protein resides in the cell outer membrane. In terms of biological role, together with LptE, is involved in the assembly of lipopolysaccharide (LPS) at the surface of the outer membrane. This is LPS-assembly protein LptD from Photobacterium profundum (strain SS9).